The primary structure comprises 90 residues: Neurotoxin LmNaTx19 (90 aa).

The N-terminal stretch at 1 to 19 is a signal peptide; sequence MNHLILIVAMCLMVIGVQC. Positions 21–80 constitute an LCN-type CS-alpha/beta domain; the sequence is KDGYLYDDVDCKFSCWDNEYCRKLCKSKKAVGGYCWRWRFSCYCTGLPDNEKTEGTYKCG. 4 cysteine pairs are disulfide-bonded: Cys31–Cys79, Cys35–Cys55, Cys41–Cys62, and Cys45–Cys64.

Belongs to the long (4 C-C) scorpion toxin superfamily. Sodium channel inhibitor family. Alpha subfamily. Expressed by the venom gland.

The protein resides in the secreted. In terms of biological role, binds voltage-independently at site-3 of voltage-gated sodium channels (Nav) and inhibits the inactivation of the activated channels, thereby blocking neuronal transmission. The chain is Neurotoxin LmNaTx19 from Lychas mucronatus (Chinese swimming scorpion).